We begin with the raw amino-acid sequence, 605 residues long: F-box/WD repeat-containing protein 1A (605 aa).

Residues 128–177 (ASYEKEKELCVKYFEQWSESDQVEFVEHLISQMCHYQHGHINSYLKPMLQ) form a homodimerization domain D region. In terms of domain architecture, F-box spans 182–228 (TALPARGLDHIAENILSYLDAKSLCAAELVCKEWYRVTSDGMLWKKL). The segment at 190–228 (DHIAENILSYLDAKSLCAAELVCKEWYRVTSDGMLWKKL) is required for down-regulation of SNAI1. WD repeat units lie at residues 301–338 (ETSK…CKRI), 341–378 (GHTG…MLNT), 381–418 (HHCE…DITL), 424–461 (GHRA…FVRT), 464–503 (GHKR…RVLE), 505–541 (HEEL…DPRA), and 553–590 (EHSG…AAHA).

Homodimer. Self-associates. Component of the SCF(BTRC) complex, composed of SKP1, CUL1 and BTRC. Direct interaction with SKP1 with SKP1 occurs via the F-box domain. Interacts with phosphorylated ubiquitination substrates SMAD3 and SMAD4. Interacts with phosphorylated ubiquitination substrates CTNNB1, NFKBIA, NFKBIB, NFKBIE, NFKB1/nuclear factor NF-kappa-B p105 subunit, ATF4, CDC25A, DLG1, FBXO5 and SNAI1; the interaction requires the phosphorylation of the 2 serine residues in the substrate destruction motif D-S-G-X(2,3,4)-S. Binds UBQLN1. Interacts with CDC34 and UBE2R2. Interacts with FBXW11. Interacts with CUL4A and DDB1. Part of a SCF(BTRC)-like complex lacking CUL1, which is associated with phosphorylated NKBIA and RELA; RELA interacts directly with NFKBIA. Interacts with the phosphorylated form of GLI3. Interacts with CLU. Interacts with PER1 (phosphorylated), PER2 (phosphorylated) and PER3. Interacts with phosphorylated ubiquitination substrate CEP68. Interacts with ZC3H12A; this interaction occurs when ZC3H12A is phosphorylated in a IKBKB/IKKB-dependent manner. Interacts with HSF1; this interaction occurs during mitosis and induces HSF1 ubiquitin-dependent degradation, a process inhibited by CDC20. Interacts with NFE2L1. Interacts with INAVA. Interacts with IL10RA; this interaction leads to IL10RA ubiquitination and subsequent degradation. Interacts with REST. Interacts with KLF4; this interaction leads to KLF4 ubiquitination and subsequent degradation. Interacts with UBR2, as part of a SCF(BTRC) complex; the interaction mediates 'Lys-48'-linked ubiquitination of UBR2 and is regulated by DUSP22 in the T-cell receptor signaling pathway. Post-translationally, ubiquitinated via 'Lys-11'-linked polyubiquitin by some cullin-5-RING E3 ubiquitin-protein ligase complex (ECS complex), leading to its degradation. Deubiquitinated by OTUD5, promoting its stability. As to expression, expressed in heart, brain, liver, skeletal muscle and, most strongly, in testis.

The protein localises to the cytoplasm. The protein resides in the nucleus. It participates in protein modification; protein ubiquitination. In terms of biological role, substrate recognition component of a SCF (SKP1-CUL1-F-box protein) E3 ubiquitin-protein ligase complex which mediates the ubiquitination and subsequent proteasomal degradation of target proteins. Recognizes and binds to phosphorylated target proteins. SCF(BTRC) mediates the ubiquitination of phosphorylated NFKB, ATF4, CDC25A, DLG1, FBXO5, PER1, SMAD3, SMAD4, SNAI1 and probably NFKB2. SCF(BTRC) mediates the ubiquitination of CTNNB1 and participates in Wnt signaling. SCF(BTRC) mediates the ubiquitination of NFKBIA, NFKBIB and NFKBIE; the degradation frees the associated NFKB1 to translocate into the nucleus and to activate transcription. Ubiquitination of NFKBIA occurs at 'Lys-21' and 'Lys-22'. The SCF(FBXW11) complex also regulates NF-kappa-B by mediating ubiquitination of phosphorylated NFKB1: specifically ubiquitinates the p105 form of NFKB1, leading to its degradation. SCF(BTRC) mediates the ubiquitination of CEP68; this is required for centriole separation during mitosis. SCF(BTRC) mediates the ubiquitination and subsequent degradation of nuclear NFE2L1. Has an essential role in the control of the clock-dependent transcription via degradation of phosphorylated PER1 and PER2. May be involved in ubiquitination and subsequent proteasomal degradation through a DBB1-CUL4 E3 ubiquitin-protein ligase. Required for activation of NFKB-mediated transcription by IL1B, MAP3K14, MAP3K1, IKBKB and TNF. Required for proteolytic processing of GLI3. Mediates ubiquitination of REST, thereby leading to its proteasomal degradation. SCF(BTRC) mediates the ubiquitination and subsequent proteasomal degradation of KLF4; thereby negatively regulating cell pluripotency maintenance and embryogenesis. SCF(BTRC) acts as a regulator of mTORC1 signaling pathway by catalyzing ubiquitination and subsequent proteasomal degradation of phosphorylated DEPTOR, TFE3 and MITF. SCF(BTRC) directs 'Lys-48'-linked ubiquitination of UBR2 in the T-cell receptor signaling pathway. The protein is F-box/WD repeat-containing protein 1A of Mus musculus (Mouse).